Consider the following 173-residue polypeptide: Adenine phosphoribosyltransferase (173 aa).

Belongs to the purine/pyrimidine phosphoribosyltransferase family. In terms of assembly, homodimer.

The protein resides in the cytoplasm. It catalyses the reaction AMP + diphosphate = 5-phospho-alpha-D-ribose 1-diphosphate + adenine. Its pathway is purine metabolism; AMP biosynthesis via salvage pathway; AMP from adenine: step 1/1. Its function is as follows. Catalyzes a salvage reaction resulting in the formation of AMP, that is energically less costly than de novo synthesis. This Desulfosudis oleivorans (strain DSM 6200 / JCM 39069 / Hxd3) (Desulfococcus oleovorans) protein is Adenine phosphoribosyltransferase.